Reading from the N-terminus, the 332-residue chain is Fructose-1,6-bisphosphatase class 1 (332 aa).

Mg(2+)-binding residues include E89, D110, L112, and D113. Substrate contacts are provided by residues 113–116 (DGSS), N206, Y239, 257–259 (YLY), and K269. E275 lines the Mg(2+) pocket.

It belongs to the FBPase class 1 family. In terms of assembly, homotetramer. Mg(2+) serves as cofactor.

Its subcellular location is the cytoplasm. The enzyme catalyses beta-D-fructose 1,6-bisphosphate + H2O = beta-D-fructose 6-phosphate + phosphate. The protein operates within carbohydrate biosynthesis; gluconeogenesis. The protein is Fructose-1,6-bisphosphatase class 1 of Klebsiella pneumoniae subsp. pneumoniae (strain ATCC 700721 / MGH 78578).